A 322-amino-acid polypeptide reads, in one-letter code: Replication factor C small subunit (322 aa).

46 to 53 (GSAGVGKT) is an ATP binding site.

This sequence belongs to the activator 1 small subunits family. RfcS subfamily. Heteromultimer composed of small subunits (RfcS) and large subunits (RfcL).

Its function is as follows. Part of the RFC clamp loader complex which loads the PCNA sliding clamp onto DNA. The polypeptide is Replication factor C small subunit (Methanoregula boonei (strain DSM 21154 / JCM 14090 / 6A8)).